Reading from the N-terminus, the 363-residue chain is Phosphoserine aminotransferase (363 aa).

L-glutamate is bound at residue R42. Residues 76–77 (GR), W102, T156, D175, and Q198 each bind pyridoxal 5'-phosphate. K199 carries the post-translational modification N6-(pyridoxal phosphate)lysine. 240–241 (NT) is a binding site for pyridoxal 5'-phosphate.

It belongs to the class-V pyridoxal-phosphate-dependent aminotransferase family. SerC subfamily. In terms of assembly, homodimer. Pyridoxal 5'-phosphate serves as cofactor.

The protein resides in the cytoplasm. The enzyme catalyses O-phospho-L-serine + 2-oxoglutarate = 3-phosphooxypyruvate + L-glutamate. It catalyses the reaction 4-(phosphooxy)-L-threonine + 2-oxoglutarate = (R)-3-hydroxy-2-oxo-4-phosphooxybutanoate + L-glutamate. It functions in the pathway amino-acid biosynthesis; L-serine biosynthesis; L-serine from 3-phospho-D-glycerate: step 2/3. The protein operates within cofactor biosynthesis; pyridoxine 5'-phosphate biosynthesis; pyridoxine 5'-phosphate from D-erythrose 4-phosphate: step 3/5. Functionally, catalyzes the reversible conversion of 3-phosphohydroxypyruvate to phosphoserine and of 3-hydroxy-2-oxo-4-phosphonooxybutanoate to phosphohydroxythreonine. This chain is Phosphoserine aminotransferase, found in Shewanella baltica (strain OS223).